A 364-amino-acid chain; its full sequence is Ribosomal RNA large subunit methyltransferase F (364 aa).

The segment at 1–30 is disordered; it reads MTNKRKSAKPLEPAKRAPKPRTKKSRDLSA.

This sequence belongs to the methyltransferase superfamily. METTL16/RlmF family.

It localises to the cytoplasm. The catalysed reaction is adenosine(1618) in 23S rRNA + S-adenosyl-L-methionine = N(6)-methyladenosine(1618) in 23S rRNA + S-adenosyl-L-homocysteine + H(+). Specifically methylates the adenine in position 1618 of 23S rRNA. This is Ribosomal RNA large subunit methyltransferase F from Vibrio vulnificus (strain CMCP6).